Consider the following 137-residue polypeptide: Transcription antitermination protein NusB (137 aa).

The protein belongs to the NusB family.

Functionally, involved in transcription antitermination. Required for transcription of ribosomal RNA (rRNA) genes. Binds specifically to the boxA antiterminator sequence of the ribosomal RNA (rrn) operons. The sequence is that of Transcription antitermination protein NusB from Aeromonas hydrophila subsp. hydrophila (strain ATCC 7966 / DSM 30187 / BCRC 13018 / CCUG 14551 / JCM 1027 / KCTC 2358 / NCIMB 9240 / NCTC 8049).